The chain runs to 118 residues: 5-hydroxyisourate hydrolase (118 aa).

Substrate is bound by residues H7, R46, and Y115.

Belongs to the transthyretin family. 5-hydroxyisourate hydrolase subfamily. As to quaternary structure, homotetramer.

It carries out the reaction 5-hydroxyisourate + H2O = 5-hydroxy-2-oxo-4-ureido-2,5-dihydro-1H-imidazole-5-carboxylate + H(+). Its function is as follows. Catalyzes the hydrolysis of 5-hydroxyisourate (HIU) to 2-oxo-4-hydroxy-4-carboxy-5-ureidoimidazoline (OHCU). The polypeptide is 5-hydroxyisourate hydrolase (Brucella melitensis biotype 1 (strain ATCC 23456 / CCUG 17765 / NCTC 10094 / 16M)).